The sequence spans 260 residues: ATP synthase subunit a (260 aa).

A run of 7 helical transmembrane segments spans residues 30–50 (IAFT…IVFV), 96–116 (LFAF…LVGV), 125–145 (FTVT…VGFA), 151–171 (FFSL…IFPI), 187–207 (LFVA…FVIS), 213–233 (VGTF…ICAL), and 234–254 (ELLV…VYLN).

The protein belongs to the ATPase A chain family. In terms of assembly, F-type ATPases have 2 components, CF(1) - the catalytic core - and CF(0) - the membrane proton channel. CF(1) has five subunits: alpha(3), beta(3), gamma(1), delta(1), epsilon(1). CF(0) has three main subunits: a(1), b(2) and c(9-12). The alpha and beta chains form an alternating ring which encloses part of the gamma chain. CF(1) is attached to CF(0) by a central stalk formed by the gamma and epsilon chains, while a peripheral stalk is formed by the delta and b chains.

Its subcellular location is the cell inner membrane. Its function is as follows. Key component of the proton channel; it plays a direct role in the translocation of protons across the membrane. This chain is ATP synthase subunit a, found in Novosphingobium aromaticivorans (strain ATCC 700278 / DSM 12444 / CCUG 56034 / CIP 105152 / NBRC 16084 / F199).